Reading from the N-terminus, the 372-residue chain is DNA polymerase delta subunit 3 (372 aa).

Disordered regions lie at residues 156 to 264 and 352 to 372; these read KKAP…NLDS and KKNT…FGKK. A compositionally biased stretch (polar residues) spans 160 to 173; the sequence is STHSPQLSVPSKTS. Residue S163 is modified to Phosphoserine. 2 stretches are compositionally biased toward basic and acidic residues: residues 174–190 and 209–239; these read TIDK…KGKD and APLE…DDLK. The segment covering 355–365 has biased composition (polar residues); sequence TAQSKPQQKSI.

As to quaternary structure, heterotetramer that consist of the pol3, cdc1, cdc27 and cdm1 subunits. Cdc27 interacts with cdc1 and is required for dimerization of the tetramer.

It is found in the nucleus. This is DNA polymerase delta subunit 3 (cdc27) from Schizosaccharomyces pombe (strain 972 / ATCC 24843) (Fission yeast).